A 160-amino-acid polypeptide reads, in one-letter code: Type-1 angiotensin II receptor-associated protein (160 aa).

The Extracellular portion of the chain corresponds to 1-9 (MELPAVNLK). Residues 10 to 30 (VILLVHWLLTTWGCLAFSGSY) traverse the membrane as a helical segment. Residues 31–53 (AWGNFTILALGVWAVAQRDSVDA) lie on the Cytoplasmic side of the membrane. A helical transmembrane segment spans residues 54–74 (IGMFLGGLVATIFLDIIYISI). Over 75–86 (FYSSVAVGDTGR) the chain is Extracellular. Residues 87–107 (FSAGMAIFSLLLKPFSCCLVY) form a helical membrane-spanning segment. Over 108-160 (HMHRERGGELPLRSDFFGPSQEHSAYQTIDSSDSPADPLASLENKGQAAPRGY) the chain is Cytoplasmic. The interaction with AGTR1 stretch occupies residues 110–122 (HRERGGELPLRSD). S127 is subject to Phosphoserine. The segment at 128-160 (QEHSAYQTIDSSDSPADPLASLENKGQAAPRGY) is disordered. Phosphothreonine is present on T135. Over residues 137–149 (DSSDSPADPLASL) the composition is skewed to low complexity. S138 carries the phosphoserine modification.

Interacts with RACK1, and with the carboxy-terminal region of AGTR1.

The protein localises to the endoplasmic reticulum membrane. It localises to the golgi apparatus membrane. It is found in the cytoplasmic vesicle membrane. In terms of biological role, appears to be a negative regulator of type-1 angiotensin II receptor-mediated signaling by regulating receptor internalization as well as mechanism of receptor desensitization such as phosphorylation. May play a role of negative regulator in cardiomyocyte hypertrophy induced by angiotensin II through an inhibition of p38 mitogen-activated protein kinase pathway. Attenuates type-1 angiotensin II receptor growth promoting effect and angiotensin II-induced phosphorylation of protein kinase AKT and of STAT3. This is Type-1 angiotensin II receptor-associated protein (Agtrap) from Rattus norvegicus (Rat).